The chain runs to 320 residues: Tyrosine recombinase Synpcc7942_B2651 (320 aa).

The 91-residue stretch at 16–106 folds into the Core-binding (CB) domain; it reads VQDWDVLQML…ALKSLVRFSR (91 aa). The region spanning 127-313 is the Tyr recombinase domain; that stretch reads RDTTGTTPER…RQDFQGECTE (187 aa). Catalysis depends on residues R167, K193, H264, R267, and H291. The active-site O-(3'-phospho-DNA)-tyrosine intermediate is the Y300.

Belongs to the 'phage' integrase family.

The protein localises to the cytoplasm. Its function is as follows. Site-specific tyrosine recombinase, which acts by catalyzing the cutting and rejoining of the recombining DNA molecules. This chain is Tyrosine recombinase Synpcc7942_B2651, found in Synechococcus elongatus (strain ATCC 33912 / PCC 7942 / FACHB-805) (Anacystis nidulans R2).